Consider the following 415-residue polypeptide: Fructose-like permease IIC component 1 (415 aa).

Over 1-46 (MAIKKRSATVVPGASGAAAAVKNPQASKTSFWGELPQHVMSGISRM) the chain is Cytoplasmic. One can recognise a PTS EIIC type-2 domain in the interval 35–410 (LPQHVMSGIS…RLMMFRKGKL (376 aa)). Residues 47–67 (VPTLIMGGVILAFSQLIAYSW) traverse the membrane as a helical segment. Residues 68–101 (LKIPAEIGIMDALNSGKFSGFDLSLLKFAWLSQS) are Periplasmic-facing. The chain crosses the membrane as a helical span at residues 102–122 (FGGVLFGFAIPMFAAFVANSI). The Cytoplasmic portion of the chain corresponds to 123-126 (GGKL). A helical membrane pass occupies residues 127–147 (AFPAGFIGGLMSTQPTQLLNF). Residues 148–157 (DPSTMQWATS) lie on the Periplasmic side of the membrane. A helical transmembrane segment spans residues 158–178 (SPVPSTFIGALIISIVAGYLV). Over 179–197 (KWMNQKIQLPDFLLAFKTT) the chain is Cytoplasmic. Residues 198-218 (FLLPILSAIFVMLAMYYVITP) traverse the membrane as a helical segment. The Periplasmic portion of the chain corresponds to 219-237 (FGGWINGGIRTVLTAAGEK). A helical transmembrane segment spans residues 238–258 (GALMYAMGIAAATAIDLGGPI). The Cytoplasmic portion of the chain corresponds to 259 to 276 (NKAAGFVAFSFTTDHVLP). The chain crosses the membrane as a helical span at residues 277-297 (VTARSIAIVIPPIGLGLATII). Residues 298–318 (DRRLTGKRLFNAQLYPQGKTA) lie on the Periplasmic side of the membrane. A helical transmembrane segment spans residues 319–339 (MFLAFMGISEGAIPFALESPI). The Cytoplasmic segment spans residues 340–341 (TA). Residues 342–362 (IPSYMVGAIVGSTAAVWLGAV) form a helical membrane-spanning segment. At 363–378 (QWFPESAIWAWPLVTN) the chain is on the periplasmic side. Residues 379–399 (LGVYMAGIALGAVITALMVVF) form a helical membrane-spanning segment. Topologically, residues 400–415 (LRLMMFRKGKLLIDSL) are cytoplasmic.

The protein resides in the cell inner membrane. The phosphoenolpyruvate-dependent sugar phosphotransferase system (PTS), a major carbohydrate active -transport system, catalyzes the phosphorylation of incoming sugar substrates concomitant with their translocation across the cell membrane. This is Fructose-like permease IIC component 1 (fryC) from Escherichia coli (strain K12).